A 43-amino-acid polypeptide reads, in one-letter code: Protein PsbN (43 aa).

The chain crosses the membrane as a helical span at residues 7–29 (VAIFLSGLLVSFTGYALYTAFGQ).

This sequence belongs to the PsbN family.

Its subcellular location is the plastid. It is found in the chloroplast thylakoid membrane. May play a role in photosystem I and II biogenesis. The sequence is that of Protein PsbN from Draba nemorosa (Woodland whitlowgrass).